The primary structure comprises 452 residues: MIQYKVLIPEISLLILAIISFFYGFISRNYRTTYILSFLSILTAIILSVFNFGQKEFTSELIKIDLYRQTLRILVLFIGVFIIGLSYSDLKLKSSKSVEYVFLLLLSLFGMNLMIVANDLLILYLALETFSLSLYILAGFYRKESLSIEAGMKYFILGTLSSIILLGSIVFFYAQTGSTSYETFKLLKTENLNILLGVVFLISAFAFKLSLAPFHAWAPDVYQGAPTAVTAFLSTAPKVAVFGALINIFLSINLKLNIQDLIVIISALSMLVGNVLALRQNNLKRMLAYSSIAHAGYMFMAFLLPEKELLISLIPYLIVYVFMNLSAFAFIMNIKNGESIQNYLGVGRKNPLLSFCIIVIMFSLTGVPPTAGFIVKFNLFKNLLSYGYGSLVFFALLMSIFSAFYYLRPVFYLYKDSLVIDIYNHPLNNSMALSGALLLIFLGLFPNLLLIF.

Helical transmembrane passes span 6–26, 33–53, 70–90, 97–117, 120–140, 154–174, 194–214, 232–252, 258–278, 286–306, 311–331, 355–375, 387–407, and 432–452; these read VLIP…YGFI, TYIL…FNFG, TLRI…YSDL, SVEY…MIVA, LLIL…LAGF, YFIL…FFYA, ILLG…LAPF, FLST…FLSI, IQDL…VLAL, MLAY…LLPE, ISLI…FAFI, FCII…GFIV, GYGS…FYYL, and ALSG…LLIF.

Belongs to the complex I subunit 2 family. NDH-1 is composed of 14 different subunits. Subunits NuoA, H, J, K, L, M, N constitute the membrane sector of the complex.

The protein resides in the cell inner membrane. The enzyme catalyses a quinone + NADH + 5 H(+)(in) = a quinol + NAD(+) + 4 H(+)(out). Functionally, NDH-1 shuttles electrons from NADH, via FMN and iron-sulfur (Fe-S) centers, to quinones in the respiratory chain. The immediate electron acceptor for the enzyme in this species is believed to be ubiquinone. Couples the redox reaction to proton translocation (for every two electrons transferred, four hydrogen ions are translocated across the cytoplasmic membrane), and thus conserves the redox energy in a proton gradient. The chain is NADH-quinone oxidoreductase subunit N 2 from Thermodesulfovibrio yellowstonii (strain ATCC 51303 / DSM 11347 / YP87).